Here is a 180-residue protein sequence, read N- to C-terminus: Putative manganese efflux pump MntP (180 aa).

Helical transmembrane passes span 6–26, 34–54, 67–87, 103–123, 130–150, and 159–179; these read LFALAVALGTDAFSLCIGIGI, IALISLTVLIFHILMPLLGWY, ASIAGALLLLYLGGKMIWDTI, GGLLLLSASVSMDALSVGFTL, LVLAAGVIGLVAGMMTFAGLT, and IGERAELVGGIILVGIGVKLF.

This sequence belongs to the MntP (TC 9.B.29) family.

The protein localises to the cell membrane. In terms of biological role, probably functions as a manganese efflux pump. The chain is Putative manganese efflux pump MntP from Desulforamulus reducens (strain ATCC BAA-1160 / DSM 100696 / MI-1) (Desulfotomaculum reducens).